The chain runs to 93 residues: MRKDIHPNYQEVLFHDTNADVFFLTRSTVKTKTTREYEGSEYPYYPLDISSASHPFYTGEQRKTSTEGRVASFNKRFGAFGGRKKAADTDAAE.

It belongs to the bacterial ribosomal protein bL31 family. Type B subfamily. In terms of assembly, part of the 50S ribosomal subunit.

The chain is Large ribosomal subunit protein bL31B from Psychrobacter arcticus (strain DSM 17307 / VKM B-2377 / 273-4).